Here is a 273-residue protein sequence, read N- to C-terminus: Undecaprenyl-diphosphatase (273 aa).

The next 7 helical transmembrane spans lie at 45 to 65, 90 to 110, 116 to 136, 154 to 173, 190 to 210, 222 to 242, and 252 to 272; these read AKTF…VMFW, LTLI…LIFH, LFNP…LIAA, YRQA…PGFS, YAAS…ATAL, ADFP…LVAI, and ISFI…YVVF.

It belongs to the UppP family.

It is found in the cell inner membrane. It catalyses the reaction di-trans,octa-cis-undecaprenyl diphosphate + H2O = di-trans,octa-cis-undecaprenyl phosphate + phosphate + H(+). Functionally, catalyzes the dephosphorylation of undecaprenyl diphosphate (UPP). Confers resistance to bacitracin. This chain is Undecaprenyl-diphosphatase, found in Enterobacter sp. (strain 638).